Consider the following 2007-residue polypeptide: Structural maintenance of chromosomes flexible hinge domain-containing protein 1 (2007 aa).

Alanine 2 carries the N-acetylalanine modification. The segment at 111 to 702 (TKERIDFLPH…LSVTWPEGDE (592 aa)) is ATPase activity domain. Serine 833 carries the post-translational modification Phosphoserine. Lysine 1350 carries the N6-acetyllysine modification. Lysine 1375 is covalently cross-linked (Glycyl lysine isopeptide (Lys-Gly) (interchain with G-Cter in SUMO2)). A Phosphothreonine modification is found at threonine 1500. The SMC hinge domain occupies 1721 to 1848 (GDILGKIAHL…DNLDAANHYR (128 aa)). Lysine 1803 carries the N6-succinyllysine modification. Serine 1975 carries the post-translational modification Phosphoserine. The disordered stretch occupies residues 1984-2007 (PIPTKRMRRESTRQNRRPKGDVPN).

The protein belongs to the SMC family. Highly divergent. In terms of assembly, homodimer; homodimerizes via its SMC hinge domain. Interacts with LRIF1. In terms of processing, sumoylated with SUMO1. During embryogenesis, specifically expressed in immature olfactory sensory neurons.

Its subcellular location is the chromosome. It carries out the reaction ATP + H2O = ADP + phosphate + H(+). Functionally, non-canonical member of the structural maintenance of chromosomes (SMC) protein family that plays a key role in epigenetic silencing by regulating chromatin architecture. Promotes heterochromatin formation in both autosomes and chromosome X, probably by mediating the merge of chromatin compartments. Plays a key role in chromosome X inactivation in females by promoting the spreading of heterochromatin. Recruited to inactivated chromosome X by Xist RNA and acts by mediating the merge of chromatin compartments: promotes random chromatin interactions that span the boundaries of existing structures, leading to create a compartment-less architecture typical of inactivated chromosome X. Required to facilitate Xist RNA spreading. Also required for silencing of a subset of clustered autosomal loci in somatic cells, such as the DUX4 locus. Has ATPase activity; may participate in structural manipulation of chromatin in an ATP-dependent manner as part of its role in gene expression regulation. Also plays a role in DNA repair: localizes to sites of DNA double-strand breaks in response to DNA damage to promote the repair of DNA double-strand breaks. Acts by promoting non-homologous end joining (NHEJ) and inhibiting homologous recombination (HR) repair. Required during preimplantation development, probably acts by regulating chromatin architecture. The chain is Structural maintenance of chromosomes flexible hinge domain-containing protein 1 from Mus musculus (Mouse).